We begin with the raw amino-acid sequence, 222 residues long: Putative thymidylate synthase (222 aa).

C139 is a catalytic residue.

It belongs to the thymidylate synthase family. Archaeal-type ThyA subfamily. Monomer.

The protein localises to the cytoplasm. Its pathway is pyrimidine metabolism; dTTP biosynthesis. In terms of biological role, may catalyze the biosynthesis of dTMP using an unknown cosubstrate. The polypeptide is Putative thymidylate synthase (Methanocaldococcus jannaschii (strain ATCC 43067 / DSM 2661 / JAL-1 / JCM 10045 / NBRC 100440) (Methanococcus jannaschii)).